Consider the following 610-residue polypeptide: Zinc metalloproteinase-disintegrin-like VAP1 (610 aa).

The first 20 residues, 1–20 (MIQVLLVTISLAVFPYQGSS), serve as a signal peptide directing secretion. The propeptide occupies 21 to 189 (VILESGNVND…KKASQSNLTP (169 aa)). Glu190 bears the Pyrrolidone carboxylic acid (Glu) mark. Positions 199–395 (KYVKLFLVAD…NMPQCILKKP (197 aa)) constitute a Peptidase M12B domain. The N-linked (GlcNAc...) asparagine glycan is linked to Asn218. 3 disulfides stabilise this stretch: Cys310/Cys390, Cys350/Cys374, and Cys352/Cys357. His335 contributes to the Zn(2+) binding site. The short motif at 335 to 346 (HEMGHNLGMDHD) is the Metal-binding element. Glu336 serves as the catalytic Proton acceptor. 2 residues coordinate Zn(2+): His339 and His345. Residues 403–488 (PAVCGNYFVE…AECTDRFQRN (86 aa)) form the Disintegrin domain. The Ca(2+) site is built by Val405, Asn408, Phe410, Glu412, Glu415, and Asp418. 14 cysteine pairs are disulfide-bonded: Cys406–Cys435, Cys417–Cys430, Cys419–Cys425, Cys429–Cys452, Cys443–Cys449, Cys448–Cys474, Cys461–Cys481, Cys468–Cys499, Cys492–Cys504, Cys511–Cys561, Cys526–Cys572, Cys539–Cys549, Cys556–Cys598, and Cys592–Cys603. Residues 467–469 (ECD) carry the D/ECD-tripeptide motif. Ca(2+) is bound by residues Asp469, Met470, Asp472, Asp483, and Arg484.

Belongs to the venom metalloproteinase (M12B) family. P-III subfamily. P-IIIc sub-subfamily. In terms of assembly, homodimer; disulfide-linked. Requires Zn(2+) as cofactor. In terms of processing, the N-terminus is blocked. In terms of tissue distribution, expressed by the venom gland.

The protein resides in the secreted. Inhibited by EDTA and EGTA, but not by PMSF. Functionally, zinc metalloprotease that has fibrinogenolytic and hemorrhagic activities. It induces apoptosis in vascular endothelial cells (VEC), without degrading extracellular matrix (it cannot cleave collagen) or inhibiting adhesion of VEC. VAP1-induced apoptosis is inhibited by antibodies for integrin alpha-3, alpha-6, beta-1 and CD9. Apoptosis is accompanied by severe cell fragmentation, which is controlled by caspases. This is Zinc metalloproteinase-disintegrin-like VAP1 from Crotalus atrox (Western diamondback rattlesnake).